Here is a 38-residue protein sequence, read N- to C-terminus: Large ribosomal subunit protein bL36 (38 aa).

It belongs to the bacterial ribosomal protein bL36 family.

This is Large ribosomal subunit protein bL36 from Prochlorococcus marinus (strain SARG / CCMP1375 / SS120).